The following is a 374-amino-acid chain: MGKGEFTFNLLCCYNREAETLTNKPVKLLIAASGTGGHLFPAIAIANQLKDYHIEWLGVPDRLETKLIPSQYPLHTISVEGFQQKLGIETLKVLSRLIGSILKVRHILKEGKFQGLFTTGGYIAAPAIIAARYLGLPVILHESNVLPGKVTRWFSRLCNVVAVGFEEGTKYLSFEKTVYLGTPVREEFLFPQSLDLPIPENVPVIVIVGGSQGAVAINQLVRKCIPAWVENGAWIIHQTGENDPNAFSLKHPQYFTLPFYHNMASLFQRANLVISRAGAGSLTELAVTHTPSILIPYPYAADNHQAYNAKIFSNQNAALVFTEGELTPEKLQTEVLELLQSSEKLEKMSLGAESLAVKDSHKKLAGLVHEILSH.

Residues 35–37 (TGG), Asn-144, Arg-185, Ser-211, and Gln-305 contribute to the UDP-N-acetyl-alpha-D-glucosamine site.

Belongs to the glycosyltransferase 28 family. MurG subfamily.

It localises to the cell inner membrane. The catalysed reaction is di-trans,octa-cis-undecaprenyl diphospho-N-acetyl-alpha-D-muramoyl-L-alanyl-D-glutamyl-meso-2,6-diaminopimeloyl-D-alanyl-D-alanine + UDP-N-acetyl-alpha-D-glucosamine = di-trans,octa-cis-undecaprenyl diphospho-[N-acetyl-alpha-D-glucosaminyl-(1-&gt;4)]-N-acetyl-alpha-D-muramoyl-L-alanyl-D-glutamyl-meso-2,6-diaminopimeloyl-D-alanyl-D-alanine + UDP + H(+). It functions in the pathway cell wall biogenesis; peptidoglycan biosynthesis. Cell wall formation. Catalyzes the transfer of a GlcNAc subunit on undecaprenyl-pyrophosphoryl-MurNAc-pentapeptide (lipid intermediate I) to form undecaprenyl-pyrophosphoryl-MurNAc-(pentapeptide)GlcNAc (lipid intermediate II). This chain is UDP-N-acetylglucosamine--N-acetylmuramyl-(pentapeptide) pyrophosphoryl-undecaprenol N-acetylglucosamine transferase, found in Trichodesmium erythraeum (strain IMS101).